Consider the following 601-residue polypeptide: Glutathione-regulated potassium-efflux system protein KefB (601 aa).

Helical transmembrane passes span 4–24, 29–49, 55–75, 87–107, 115–135, 152–172, 177–197, 207–227, 230–250, 268–288, 291–311, 324–344, and 356–376; these read SDFL…VPLA, IGAV…GLGF, EILH…GLEL, IFGV…GLLM, AAVV…LQLM, VLLF…LLAG, HFDW…LIGG, FIAA…LVLG, LFMD…GVLL, GLLL…GVLY, LLWV…VLYL, MQFA…FSTA, and ALLL…MKLV. Residues 400-519 form the RCK N-terminal domain; that stretch reads KPQVIVVGFG…AGVTQFSRET (120 aa).

It belongs to the monovalent cation:proton antiporter 2 (CPA2) transporter (TC 2.A.37) family. KefB subfamily. Interacts with the regulatory subunit KefG.

It localises to the cell inner membrane. Functionally, pore-forming subunit of a potassium efflux system that confers protection against electrophiles. Catalyzes K(+)/H(+) antiport. The sequence is that of Glutathione-regulated potassium-efflux system protein KefB from Escherichia coli O17:K52:H18 (strain UMN026 / ExPEC).